Consider the following 1009-residue polypeptide: Dihydropyrimidine dehydrogenase [NADP(+)] (1009 aa).

In terms of domain architecture, 4Fe-4S ferredoxin-type 1 spans 69–99 (RGALFESARCLKCADAPCQKGCPTQLDIKSF). 4 residues coordinate [4Fe-4S] cluster: Cys-78, Cys-81, Cys-86, and Cys-90. Val-128 contacts FAD. The [4Fe-4S] cluster site is built by Cys-129, Cys-135, Cys-139, and Gln-155. Residues 193–197 (GCGPT), 217–225 (EKEQYLGGL), Arg-234, and Leu-260 contribute to the FAD site. NADP(+) is bound by residues 339-342 (AGDT), 363-364 (RR), Arg-370, 436-438 (AFG), and 479-484 (DLVGNG). 478-486 (GDLVGNGTT) contributes to the FAD binding site. FMN contacts are provided by residues Ser-548 and 572–573 (KT). Substrate contacts are provided by residues Asn-607 and 666–668 (NLS). Cys-669 functions as the Proton acceptor in the catalytic mechanism. Residue Lys-707 participates in FMN binding. 734–735 (NT) lines the substrate pocket. FMN contacts are provided by residues Gly-765, 791–793 (TGG), and 814–815 (CS). 4Fe-4S ferredoxin-type domains are found at residues 932–964 (VVAL…FDGK) and 965–995 (THIP…MVPR). Residues Cys-941, Cys-944, Cys-947, Cys-951, Cys-974, Cys-977, Cys-980, and Cys-984 each contribute to the [4Fe-4S] cluster site.

It belongs to the dihydropyrimidine dehydrogenase family. Homodimer. It depends on [4Fe-4S] cluster as a cofactor. FAD serves as cofactor. Requires FMN as cofactor.

The protein localises to the cytoplasm. It carries out the reaction 5,6-dihydrouracil + NADP(+) = uracil + NADPH + H(+). The protein operates within amino-acid biosynthesis; beta-alanine biosynthesis. Involved in pyrimidine base degradation. Catalyzes the reduction of uracil and thymine. The sequence is that of Dihydropyrimidine dehydrogenase [NADP(+)] (pyd1) from Dictyostelium discoideum (Social amoeba).